The following is a 380-amino-acid chain: Glucose-1-phosphate adenylyltransferase (380 aa).

Residues Gly-164, 179 to 180, and Ser-190 contribute to the alpha-D-glucose 1-phosphate site; that span reads EK.

Belongs to the bacterial/plant glucose-1-phosphate adenylyltransferase family. In terms of assembly, homotetramer.

The enzyme catalyses alpha-D-glucose 1-phosphate + ATP + H(+) = ADP-alpha-D-glucose + diphosphate. It participates in glycan biosynthesis; glycogen biosynthesis. Its function is as follows. Involved in the biosynthesis of ADP-glucose, a building block required for the elongation reactions to produce glycogen. Catalyzes the reaction between ATP and alpha-D-glucose 1-phosphate (G1P) to produce pyrophosphate and ADP-Glc. The sequence is that of Glucose-1-phosphate adenylyltransferase from Streptococcus pneumoniae (strain 70585).